The chain runs to 358 residues: Peptide chain release factor 1 (358 aa).

An N5-methylglutamine modification is found at Gln235.

This sequence belongs to the prokaryotic/mitochondrial release factor family. In terms of processing, methylated by PrmC. Methylation increases the termination efficiency of RF1.

Its subcellular location is the cytoplasm. Its function is as follows. Peptide chain release factor 1 directs the termination of translation in response to the peptide chain termination codons UAG and UAA. The sequence is that of Peptide chain release factor 1 from Neisseria meningitidis serogroup B (strain ATCC BAA-335 / MC58).